The primary structure comprises 192 residues: Small ribosomal subunit protein uS5 (192 aa).

Residues 20 to 83 form the S5 DRBM domain; sequence FVDKLVHINR…EAAKRGLIRV (64 aa). Positions 162-192 are disordered; the sequence is SVAARRGLKVSALQARRRDADPADTSEAAVA.

Belongs to the universal ribosomal protein uS5 family. Part of the 30S ribosomal subunit. Contacts proteins S4 and S8.

Its function is as follows. With S4 and S12 plays an important role in translational accuracy. In terms of biological role, located at the back of the 30S subunit body where it stabilizes the conformation of the head with respect to the body. This chain is Small ribosomal subunit protein uS5, found in Methylorubrum extorquens (strain CM4 / NCIMB 13688) (Methylobacterium extorquens).